Here is a 38-residue protein sequence, read N- to C-terminus: Large ribosomal subunit protein bL36 (38 aa).

It belongs to the bacterial ribosomal protein bL36 family.

The chain is Large ribosomal subunit protein bL36 from Lacticaseibacillus casei (strain BL23) (Lactobacillus casei).